A 628-amino-acid chain; its full sequence is Kelch-like protein diablo (628 aa).

A disordered region spans residues 1 to 56 (MGDLPGSTGGGSGPAAAGNASGNSSSAGNTGLGVAGTTGVDRPPSPARLSHTSEKH). A compositionally biased stretch (low complexity) spans 14–29 (PAAAGNASGNSSSAGN). A BTB domain is found at 74 to 141 (CDVVLNVGGR…CYTAHIIVEE (68 aa)). In terms of domain architecture, BACK spans 176–278 (CLGIRAFADT…SPKFLVGTVG (103 aa)). Kelch repeat units lie at residues 325–371 (VLFA…VLND), 373–419 (LYAV…VLDG), 420–466 (FLYA…VLGG), 468–513 (LYAI…VFNN), 515–560 (IYAV…VVNG), and 561–607 (QLYA…VMRA).

It functions in the pathway protein modification; protein ubiquitination. Functionally, probable substrate-specific adapter of an E3 ubiquitin-protein ligase complex which mediates the ubiquitination and subsequent proteasomal degradation of target proteins. May have a role in synapse differentiation and growth. The protein is Kelch-like protein diablo of Drosophila persimilis (Fruit fly).